We begin with the raw amino-acid sequence, 120 residues long: Large ribosomal subunit protein bL12 (120 aa).

The protein belongs to the bacterial ribosomal protein bL12 family. Homodimer. Part of the ribosomal stalk of the 50S ribosomal subunit. Forms a multimeric L10(L12)X complex, where L10 forms an elongated spine to which 2 to 4 L12 dimers bind in a sequential fashion. Binds GTP-bound translation factors.

Its function is as follows. Forms part of the ribosomal stalk which helps the ribosome interact with GTP-bound translation factors. Is thus essential for accurate translation. The polypeptide is Large ribosomal subunit protein bL12 (Brevibacillus brevis (strain 47 / JCM 6285 / NBRC 100599)).